The primary structure comprises 449 residues: Serine/threonine-protein phosphatase 2A activator 2 (449 aa).

Disordered stretches follow at residues 1-72 (MDSS…DPST) and 378-416 (MSEQ…PTGW). Residues 54 to 69 (NPTPVPETPALPPRPD) are compositionally biased toward pro residues. The span at 389–403 (EENEEEGGEVEVYDD) shows a compositional bias: acidic residues.

It belongs to the PTPA-type PPIase family.

The protein resides in the cytoplasm. It catalyses the reaction [protein]-peptidylproline (omega=180) = [protein]-peptidylproline (omega=0). Functionally, PPIases accelerate the folding of proteins. It catalyzes the cis-trans isomerization of proline imidic peptide bonds in oligopeptides. Acts as a regulatory subunit for PP2A-like phosphatases modulating their activity or substrate specificity, probably by inducing a conformational change in the catalytic subunit, a direct target of the PPIase. Can reactivate inactive phosphatase PP2A-phosphatase methylesterase complexes (PP2Ai) in presence of ATP and Mg(2+) by dissociating the inactive form from the complex. This is Serine/threonine-protein phosphatase 2A activator 2 (rrd-2) from Neurospora crassa (strain ATCC 24698 / 74-OR23-1A / CBS 708.71 / DSM 1257 / FGSC 987).